Here is a 232-residue protein sequence, read N- to C-terminus: 7-cyano-7-deazaguanine synthase (232 aa).

8–18 (FSGGQDSTTCL) contacts ATP. Cys-187, Cys-196, Cys-199, and Cys-202 together coordinate Zn(2+).

It belongs to the QueC family. Requires Zn(2+) as cofactor.

It catalyses the reaction 7-carboxy-7-deazaguanine + NH4(+) + ATP = 7-cyano-7-deazaguanine + ADP + phosphate + H2O + H(+). The protein operates within purine metabolism; 7-cyano-7-deazaguanine biosynthesis. Functionally, catalyzes the ATP-dependent conversion of 7-carboxy-7-deazaguanine (CDG) to 7-cyano-7-deazaguanine (preQ(0)). The protein is 7-cyano-7-deazaguanine synthase of Shewanella denitrificans (strain OS217 / ATCC BAA-1090 / DSM 15013).